A 385-amino-acid chain; its full sequence is 1-deoxy-D-xylulose 5-phosphate reductoisomerase (385 aa).

Residues Thr10, Gly11, Ser12, Ile13, Asn38, and Asn124 each coordinate NADPH. Lys125 contributes to the 1-deoxy-D-xylulose 5-phosphate binding site. Glu126 contacts NADPH. Asp150 is a binding site for Mn(2+). 1-deoxy-D-xylulose 5-phosphate is bound by residues Ser151, Glu152, Ser176, and His199. Glu152 is a Mn(2+) binding site. Residue Gly205 coordinates NADPH. Residues Ser212, Asn217, Lys218, and Glu221 each contribute to the 1-deoxy-D-xylulose 5-phosphate site. Mn(2+) is bound at residue Glu221.

It belongs to the DXR family. Mg(2+) is required as a cofactor. Requires Mn(2+) as cofactor.

The enzyme catalyses 2-C-methyl-D-erythritol 4-phosphate + NADP(+) = 1-deoxy-D-xylulose 5-phosphate + NADPH + H(+). The protein operates within isoprenoid biosynthesis; isopentenyl diphosphate biosynthesis via DXP pathway; isopentenyl diphosphate from 1-deoxy-D-xylulose 5-phosphate: step 1/6. Functionally, catalyzes the NADPH-dependent rearrangement and reduction of 1-deoxy-D-xylulose-5-phosphate (DXP) to 2-C-methyl-D-erythritol 4-phosphate (MEP). The polypeptide is 1-deoxy-D-xylulose 5-phosphate reductoisomerase (Clostridium acetobutylicum (strain ATCC 824 / DSM 792 / JCM 1419 / IAM 19013 / LMG 5710 / NBRC 13948 / NRRL B-527 / VKM B-1787 / 2291 / W)).